The sequence spans 232 residues: Ubiquinone biosynthesis O-methyltransferase (232 aa).

S-adenosyl-L-methionine contacts are provided by Arg36, Gly55, Asp76, and Met120.

It belongs to the methyltransferase superfamily. UbiG/COQ3 family.

It carries out the reaction a 3-demethylubiquinol + S-adenosyl-L-methionine = a ubiquinol + S-adenosyl-L-homocysteine + H(+). It catalyses the reaction a 3-(all-trans-polyprenyl)benzene-1,2-diol + S-adenosyl-L-methionine = a 2-methoxy-6-(all-trans-polyprenyl)phenol + S-adenosyl-L-homocysteine + H(+). It functions in the pathway cofactor biosynthesis; ubiquinone biosynthesis. In terms of biological role, O-methyltransferase that catalyzes the 2 O-methylation steps in the ubiquinone biosynthetic pathway. The sequence is that of Ubiquinone biosynthesis O-methyltransferase from Burkholderia lata (strain ATCC 17760 / DSM 23089 / LMG 22485 / NCIMB 9086 / R18194 / 383).